A 157-amino-acid chain; its full sequence is Electron transfer flavoprotein regulatory factor 1 homolog (157 aa).

Belongs to the complex I LYR family.

It localises to the mitochondrion. This chain is Electron transfer flavoprotein regulatory factor 1 homolog, found in Dictyostelium discoideum (Social amoeba).